A 968-amino-acid polypeptide reads, in one-letter code: RNA polymerase-associated protein RapA (968 aa).

The 171-residue stretch at 164-334 folds into the Helicase ATP-binding domain; that stretch reads DVGRRHAPRV…FARLRLLDPN (171 aa). 177 to 184 contacts ATP; sequence DEVGLGKT. Residues 280-283 carry the DEAH box motif; it reads DEAH. Positions 490–685 constitute a Helicase C-terminal domain; sequence RVEWLMGYLT…ALKAQLEQGR (196 aa).

Belongs to the SNF2/RAD54 helicase family. RapA subfamily. In terms of assembly, interacts with the RNAP. Has a higher affinity for the core RNAP than for the holoenzyme. Its ATPase activity is stimulated by binding to RNAP.

Its function is as follows. Transcription regulator that activates transcription by stimulating RNA polymerase (RNAP) recycling in case of stress conditions such as supercoiled DNA or high salt concentrations. Probably acts by releasing the RNAP, when it is trapped or immobilized on tightly supercoiled DNA. Does not activate transcription on linear DNA. Probably not involved in DNA repair. This chain is RNA polymerase-associated protein RapA, found in Salmonella newport (strain SL254).